A 122-amino-acid polypeptide reads, in one-letter code: UPF0102 protein NGR_c36770 (122 aa).

This sequence belongs to the UPF0102 family.

In Sinorhizobium fredii (strain NBRC 101917 / NGR234), this protein is UPF0102 protein NGR_c36770.